We begin with the raw amino-acid sequence, 6629 residues long: Replicase polyprotein 1ab (6629 aa).

Topologically, residues 1–1750 (MASSLKQGVS…VASYKTVLCK (1750 aa)) are cytoplasmic. Residues 675 to 780 (KTVTFGETTV…SCHLIYRDYE (106 aa)) enclose the Ubiquitin-like 1 domain. A disordered region spans residues 783–802 (DDIEEEDAEECDTDSGEAEE). The Macro domain maps to 1003–1179 (VKPATCEKPK…YFDVTCKQKT (177 aa)). One can recognise a Ubiquitin-like 2 domain in the interval 1175–1227 (CKQKTIYLTEDGVKYRSIVLKPGDSLGQFGQVYAKNKIVFTADDVEDKEILYV). The Peptidase C16 domain occupies 1236 to 1497 (EYYGLDAQKY…SKSVKEDVSN (262 aa)). Catalysis depends on C1274, which acts as the For PL-PRO activity. Residues C1353, C1355, C1387, and C1390 each coordinate Zn(2+). The segment at 1353 to 1390 (CNCGIKSYELRGLEACIQPVRATNLLHFKTQYSNCPTC) adopts a C4-type; degenerate zinc-finger fold. Residues H1437 and D1448 each act as for PL-PRO activity in the active site. The chain crosses the membrane as a helical span at residues 1751–1771 (VVLATLLIVWFVYTSNPVMFT). The segment at 1751-1864 (VVLATLLIVW…KPVAGFVIIC (114 aa)) is HD1. The region spanning 1769–1833 (MFTGIRVLDF…AYSVEQVYKD (65 aa)) is the 3Ecto domain. Residues 1772–1843 (GIRVLDFLFE…AASGFIFNWN (72 aa)) are Lumenal-facing. 2 cysteine pairs are disulfide-bonded: C1785/C1811 and C1802/C1808. Residues 1844–1864 (WLYLVFLILFVKPVAGFVIIC) form a helical membrane-spanning segment. At 1865–2280 (YCVKYLVLNS…TFKCFKSYFK (416 aa)) the chain is on the cytoplasmic side. The interval 1911–2001 (YIQVHHILYC…KLKRHVKPTA (91 aa)) is Y1. A CoV Nsp3 Y domain is found at 1911–2263 (YIQVHHILYC…HTQKLLVEKK (353 aa)). H1915, C1920, C1925, C1928, C1961, H1964, C1968, and C1971 together coordinate Zn(2+). The segment at 1915–1928 (HHILYCKDVTCEVC) is ZF1. Positions 1961 to 1971 (CKRHNWYCRNC) are ZF2. The interval 2002-2104 (YAYHVVDEAC…ILDQALYEQL (103 aa)) is Y2. The coV-Y stretch occupies residues 2002-2263 (YAYHVVDEAC…HTQKLLVEKK (262 aa)). A Y3 region spans residues 2105–2163 (VVEPVSKSVIDKVCSILSSIISVDTAALNYKAGTLRDALLSITKDEEAVDMAIFCHNHD). The segment at 2164-2263 (VDYTGDGFTN…HTQKLLVEKK (100 aa)) is Y4. Residues 2281-2301 (WLLIFYILFTACCSGYYYMEV) form a helical membrane-spanning segment. Residues 2281-2664 (WLLIFYILFT…LACCYLGFII (384 aa)) are HD2. Topologically, residues 2302–2559 (SKSFVHPMYD…FFTGVNPNIY (258 aa)) are lumenal. Residues 2560–2580 (MQLATMFLILVVVVLIFAMVI) form a helical membrane-spanning segment. At 2581 to 2611 (KFQGVFKAYATTVFITMLVWVINAFILCVHS) the chain is on the cytoplasmic side. Residues 2612-2632 (YNSVLAVILLVLYCYASLVTS) form a helical membrane-spanning segment. Topologically, residues 2633–2643 (RNTVIIMHCWL) are lumenal. A helical transmembrane segment spans residues 2644–2664 (VFTFGLIVPTWLACCYLGFII). The Cytoplasmic segment spans residues 2665–3096 (YMYTPLFLWC…SSFVRKATSW (432 aa)). The 96-residue stretch at 2684 to 2779 (LYDGNEFVGN…RYSIGVSRLQ (96 aa)) folds into the Nsp4C domain. Residues 2780-3086 (SGFKKLVSPS…FNQIGGVRLQ (307 aa)) form the Peptidase C30 domain. Catalysis depends on for 3CL-PRO activity residues H2820 and C2922. A helical membrane pass occupies residues 3097–3117 (FWSRCVLACFLFVLCAIVLFT). The interval 3097–3317 (FWSRCVLACF…WLCTCYFGLY (221 aa)) is HD3. The Lumenal portion of the chain corresponds to 3118 to 3121 (AVPL). Residues 3122–3142 (KFYVYAAVILLMAVLFISFTV) form a helical membrane-spanning segment. The Cytoplasmic segment spans residues 3143 to 3151 (KHVMAYMDT). The chain crosses the membrane as a helical span at residues 3152–3172 (FLLPTLITVIIGVCAEVPFIY). At 3173–3188 (NTLISQVVIFLSQWYD) the chain is on the lumenal side. The chain crosses the membrane as a helical span at residues 3189 to 3209 (PVVFDTMVPWMFLPLVLYTAF). Residues 3210 to 3257 (KCVQGCYMNSFNTSLLMLYQFVKLGFVIYTSSNTLTAYTEGNWELFFE) lie on the Cytoplasmic side of the membrane. A helical membrane pass occupies residues 3258-3278 (LVHTTVLANVSSNSLIGLFVF). Topologically, residues 3279–3296 (KCAKWMLYYCNATYLNNY) are lumenal. A helical membrane pass occupies residues 3297 to 3317 (VLMAVMVNCIGWLCTCYFGLY). The Cytoplasmic segment spans residues 3318–6629 (WWVNKVFGLT…FTSDSFVCTM (3312 aa)). A RdRp Nsp7 cofactor domain is found at 3380-3462 (AKLSDVKCTT…DILKRSTVLQ (83 aa)). One can recognise a RdRp Nsp8 cofactor domain in the interval 3463–3672 (SVTQEFSHIP…GHNKVDVVLQ (210 aa)). Residues 3673–3783 (NNELMPHGVK…GAISNVVVLQ (111 aa)) form the Nsp9 ssRNA-binding domain. The region spanning 3785 to 3926 (KGHETEEVDA…CDSLRQPKSS (142 aa)) is the ExoN/MTase coactivator domain. Residues C3858, C3861, H3867, C3878, C3904, C3907, C3915, and C3917 each coordinate Zn(2+). 2 zinc fingers span residues 3858-3878 (CLYC…DGRC) and 3904-3917 (CTVC…GCQC). The 259-residue stretch at 3940-4198 (YLNRVRGSSE…APERYFEYDV (259 aa)) folds into the NiRAN domain. One can recognise a Nsp12 Interface domain in the interval 4203 to 4301 (KSYDLLKYDY…MNQDNTMSFS (99 aa)). The Zn(2+) site is built by H4232, C4238, C4243, C4247, and C4424. One can recognise a Nsp12 RNA-dependent RNA polymerase domain in the interval 4302–4868 (KMGLSQLMQF…NMYRAPTTLQ (567 aa)). The interval 4304–4517 (GLSQLMQFVG…HQKILKSIVN (214 aa)) is rdRp Fingers N-ter. The tract at residues 4518 to 4556 (TRNASVVIGTTKFYGGWDNMLRNLIQGVEDPILMGWDYP) is rdRp Palm N-ter. A RdRp catalytic domain is found at 4548-4710 (PILMGWDYPK…CYNNTLAKQG (163 aa)). Positions 4557–4615 (KCDRAMPNLLRIAASLVLARKHTNCCSWSERIYRLYNECAQVLSETVLATGGIYVKPGG) are rdRp Fingers C-ter. Residues H4578, C4581, and C4582 each contribute to the Zn(2+) site. Residues 4616 to 4751 (TSSGDATTAY…EKGPHEFCSQ (136 aa)) form a rdRp Palm C-ter region. Active-site residues include S4695, D4696, and D4697. The tract at residues 4752–4868 (HTMLVEVDGE…NMYRAPTTLQ (117 aa)) is rdRp Thumb. The region spanning 4869-4981 (SCGVCVVCNS…DDFNQLATTN (113 aa)) is the CV ZBD domain. C4873, C4876, C4884, C4887, C4894, C4897, H4901, H4907, C4918, C4923, C4940, and H4943 together coordinate Zn(2+). The (+)RNA virus helicase ATP-binding domain occupies 5125-5305 (MVPECFVNNI…MVCVKPDIFL (181 aa)). 5150 to 5157 (GPPGSGKS) is an ATP binding site. The 172-residue stretch at 5306–5477 (AKCYRCPKEI…QGTGLFKICN (172 aa)) folds into the (+)RNA virus helicase C-terminal domain. Positions 5539-5753 (MFITRDEAIR…RCLAINNAFC (215 aa)) constitute an ExoN domain. Catalysis depends on residues D5557, E5559, and E5658. 7 residues coordinate Zn(2+): C5674, C5676, C5692, H5695, H5723, C5727, and H5730. Active-site residues include H5734 and D5739. C5745 serves as a coordination point for Zn(2+). An N7-MTase domain is found at 5762–5989 (YPHIANEDEV…NLWKSFSALQ (228 aa)). 5797 to 5803 (DIGNPKG) serves as a coordination point for S-adenosyl-L-methionine. The gpppA-binding stretch occupies residues 5877–5891 (CNGGSLYVNKHAFYT). The Zn(2+) site is built by C5915, C5935, C5946, and H5949. The 61-residue stretch at 5990–6050 (SIDNIAYNMY…SVAFELYAKR (61 aa)) folds into the Nsp15 N-terminal oligomerization domain. One can recognise an AV-Nsp11N/CoV-Nsp15M domain in the interval 6051–6166 (NIRTLPNNRI…VYKRVNGAFV (116 aa)). Positions 6183-6324 (EPRSDIERDF…EDGSIKTCYP (142 aa)) constitute a NendoU domain. Residues H6212, H6227, K6267, K6371, D6455, K6499, and E6532 contribute to the active site. In terms of domain architecture, Nidovirus-type SAM-dependent 2'-O-MTase spans 6327–6626 (QSAWTCGYNM…NTSFTSDSFV (300 aa)).

Belongs to the coronaviruses polyprotein 1ab family. Interacts with host PHB and PHB2. As to quaternary structure, interacts with papain-like protease and non-structural protein 6. In terms of assembly, monomer. Homodimer. Only the homodimer shows catalytic activity. Eight copies of nsp7 and eight copies of nsp8 assemble to form a heterohexadecamer dsRNA-encircling ring structure. As to quaternary structure, eight copies of nsp7 and eight copies of nsp8 assemble to form a heterohexadecamer dsRNA-encircling ring structure. Interacts with ORF6 protein. In terms of assembly, homodimer. Homododecamer. Interacts with proofreading exoribonuclease nsp14 and 2'-O-methyltransferase nsp16; these interactions enhance nsp14 and nsp16 enzymatic activities. As to quaternary structure, interacts with host DDX1 (via C-terminus). Interacts with non-structural protein 10. In terms of assembly, homohexamer. Interacts with non-structural protein 10. It depends on Mn(2+) as a cofactor. The cofactor is Zn(2+). In terms of processing, specific enzymatic cleavages in vivo by its own proteases yield mature proteins. 3C-like proteinase nsp5 liberates nsps 6-16 from the polyprotein. Papain-like and 3C-like proteinases are autocatalytically processed. N-glycosylated.

It is found in the host endoplasmic reticulum membrane. It localises to the host cytoplasm. The protein resides in the host perinuclear region. Its subcellular location is the host endoplasmic reticulum. The protein localises to the host endoplasmic reticulum-Golgi intermediate compartment. The enzyme catalyses Thiol-dependent hydrolysis of ester, thioester, amide, peptide and isopeptide bonds formed by the C-terminal Gly of ubiquitin (a 76-residue protein attached to proteins as an intracellular targeting signal).. It catalyses the reaction RNA(n) + a ribonucleoside 5'-triphosphate = RNA(n+1) + diphosphate. It carries out the reaction ATP + H2O = ADP + phosphate + H(+). The catalysed reaction is uridylyl-uridylyl-ribonucleotide-RNA = a 3'-end uridylyl-2',3'-cyclophospho-uridine-RNA + a 5'-end dephospho-ribonucleoside-RNA. The enzyme catalyses a 5'-end diphospho-ribonucleoside in mRNA + GTP + H(+) = a 5'-end (5'-triphosphoguanosine)-ribonucleoside in mRNA + diphosphate. It catalyses the reaction a 5'-end (N(7)-methyl 5'-triphosphoguanosine)-ribonucleoside in mRNA + S-adenosyl-L-methionine = a 5'-end (N(7)-methyl 5'-triphosphoguanosine)-(2'-O-methyl-ribonucleoside) in mRNA + S-adenosyl-L-homocysteine + H(+). Multifunctional protein involved in the transcription and replication of viral RNAs. Contains the proteinases responsible for the cleavages of the polyprotein. Functionally, may play a role in the modulation of host cell survival signaling pathway by interacting with host PHB and PHB2. Indeed, these two proteins play a role in maintaining the functional integrity of the mitochondria and protecting cells from various stresses. In terms of biological role, responsible for the cleavages located at the N-terminus of the replicase polyprotein. In addition, PL-PRO possesses a deubiquitinating/deISGylating activity and processes both 'Lys-48'- and 'Lys-63'-linked polyubiquitin chains from cellular substrates. Its function is as follows. Plays a role in host membrane rearrangement that leads to creation of cytoplasmic double-membrane vesicles (DMV) necessary for viral replication. Alone is able to induce paired membranes. Coexpression of nsp3 and nsp4 does not result in the formation of DMVs. Responsible for the majority of cleavages as it cleaves the C-terminus of replicase polyprotein at 11 sites. Recognizes substrates containing the core sequence [ILMVF]-Q-|-[SGACN]. Inhibited by the substrate-analog Cbz-Val-Asn-Ser-Thr-Leu-Gln-CMK. Functionally, forms a hexadecamer with nsp8 (8 subunits of each) that may participate in viral replication by acting as a primase. Alternatively, may synthesize substantially longer products than oligonucleotide primers. In terms of biological role, forms a hexadecamer with nsp7 (8 subunits of each) that may participate in viral replication by acting as a primase. Alternatively, may synthesize substantially longer products than oligonucleotide primers. Its function is as follows. Forms a primer, NSP9-pU, which is utilized by the polymerase for the initiation of RNA chains. Interacts with ribosome signal recognition particle RNA (SRP). Together with NSP8, suppress protein integration into the cell membrane, thereby disrupting host immune defenses. Plays a pivotal role in viral transcription by stimulating both nsp14 3'-5' exoribonuclease and nsp16 2'-O-methyltransferase activities. Therefore plays an essential role in viral mRNAs cap methylation. Functionally, RNA-directed RNA polymerase that catalyzes the transcription of viral genomic and subgenomic RNAs. Acts in complex with nsp7 and nsp8 to transcribe both the minus and positive strands of genomic RNA. The kinase-like NiRAN domain of NSP12 attaches one or more nucleotides to the amino terminus of NSP9, forming a covalent RNA-protein intermediate that serves as transcription/replication primer. Subgenomic RNAs (sgRNAs) are formed by discontinuous transcription: The polymerase has the ability to pause at transcription-regulating sequences (TRS) and jump to the leader TRS, resulting in a major deletion. This creates a series of subgenomic RNAs that are replicated, transcribed and translated. In addition, Nsp12 is a subunit of the viral RNA capping enzyme that catalyzes the RNA guanylyltransferase reaction for genomic and sub-genomic RNAs. Subsequently, the NiRAN domain transfers RNA to GDP, and forms the core cap structure GpppA-RNA. In terms of biological role, multi-functional protein with a zinc-binding domain in N-terminus displaying RNA and DNA duplex-unwinding activities with 5' to 3' polarity. Activity of helicase is dependent on magnesium. Its function is as follows. Enzyme possessing two different activities: an exoribonuclease activity acting on both ssRNA and dsRNA in a 3' to 5' direction and a N7-guanine methyltransferase activity. Acts as a proofreading exoribonuclease for RNA replication, thereby lowering The sensitivity of the virus to RNA mutagens. Plays a role in viral transcription/replication and prevents the simultaneous activation of host cell dsRNA sensors, such as MDA5/IFIH1, OAS, and PKR. Acts by degrading the 5'-polyuridines generated during replication of the poly(A) region of viral genomic and subgenomic RNAs. Catalyzes a two-step reaction in which a 2'3'-cyclic phosphate (2'3'-cP) is first generated by 2'-O transesterification, which is then hydrolyzed to a 3'-phosphate (3'-P). If not degraded, poly(U) RNA would hybridize with poly(A) RNA tails and activate host dsRNA sensors. Functionally, methyltransferase that mediates mRNA cap 2'-O-ribose methylation to the 5'-cap structure of viral mRNAs. N7-methyl guanosine cap is a prerequisite for binding of nsp16. Therefore plays an essential role in viral mRNAs cap methylation which is essential to evade immune system. In Gallus gallus (Chicken), this protein is Replicase polyprotein 1ab (rep).